Consider the following 205-residue polypeptide: Isochorismatase domain-containing protein 2 (205 aa).

Ser7 and Ser202 each carry phosphoserine.

This sequence belongs to the isochorismatase family. As to quaternary structure, interacts with CDKN2A.

The protein resides in the cytoplasm. Its subcellular location is the nucleus. In Pongo abelii (Sumatran orangutan), this protein is Isochorismatase domain-containing protein 2 (ISOC2).